The chain runs to 147 residues: Hemoglobin subunit epsilon (147 aa).

Residues H3 to H147 form the Globin domain. A phosphoserine mark is found at S14 and S51. Positions 64 and 93 each coordinate heme b.

It belongs to the globin family. Heterotetramer of two alpha chains and two epsilon chains in early embryonic hemoglobin Gower-2; two zeta chains and two epsilon chains in early embryonic hemoglobin Gower-1. Red blood cells.

In terms of biological role, the epsilon chain is a beta-type chain of early mammalian embryonic hemoglobin. The chain is Hemoglobin subunit epsilon (HBE1) from Carlito syrichta (Philippine tarsier).